We begin with the raw amino-acid sequence, 1109 residues long: DNA mismatch repair protein MSH7 (1109 aa).

2 disordered regions span residues 19-45 and 61-86; these read TKGL…KEGD and DEVR…KPAE. Residues 61-74 are compositionally biased toward basic and acidic residues; it reads DEVRGTDTPPEKVP. 853 to 860 is a binding site for ATP; the sequence is GPNMGGKS.

The protein belongs to the DNA mismatch repair MutS family. Heterodimer consisting of MSH2-MSH7 (MutS gamma).

Its subcellular location is the nucleus. Component of the post-replicative DNA mismatch repair system (MMR). Forms the heterodimer MutS gamma (MSH2-MSH7 heterodimer) which binds to DNA mismatches thereby initiating DNA repair. MutS gamma recognizes specifically the T/G single base mismatch, but not trinucleotide insertion-deletion loops (IDL). The sequence is that of DNA mismatch repair protein MSH7 (MSH7) from Arabidopsis thaliana (Mouse-ear cress).